Here is a 283-residue protein sequence, read N- to C-terminus: MLRIAVPNKGMLSEPAWNMLAEAGYRLRTNPRQLVVQDPDNGIELFYLRPLDIAVYVGRGAIDVGITGQDLLKNSGTAALEHMPLGFGTSTFRFAAPNESPITTLEDIQGKRVATTFDKLVHDYLVEHGIQAETIHLDGAVESSVQLGVADLIADVVSTGTTLRNAGLRVFAEPLMHSEACLIRSPRLNEQDSRLAVLTRRLQGVLTAHQYVLMDYDIPISKVAAAVAVTPGFESPTISPLHDKQWNAVRVMVPKAKVNQLMDDLYEVGARGIIVTALQASRM.

The protein belongs to the ATP phosphoribosyltransferase family. Long subfamily. It depends on Mg(2+) as a cofactor.

The protein resides in the cytoplasm. The enzyme catalyses 1-(5-phospho-beta-D-ribosyl)-ATP + diphosphate = 5-phospho-alpha-D-ribose 1-diphosphate + ATP. It functions in the pathway amino-acid biosynthesis; L-histidine biosynthesis; L-histidine from 5-phospho-alpha-D-ribose 1-diphosphate: step 1/9. With respect to regulation, feedback inhibited by histidine. In terms of biological role, catalyzes the condensation of ATP and 5-phosphoribose 1-diphosphate to form N'-(5'-phosphoribosyl)-ATP (PR-ATP). Has a crucial role in the pathway because the rate of histidine biosynthesis seems to be controlled primarily by regulation of HisG enzymatic activity. The polypeptide is ATP phosphoribosyltransferase (Bifidobacterium longum (strain NCC 2705)).